The chain runs to 318 residues: Thioredoxin reductase (318 aa).

36 to 43 (TGLQQGGQ) provides a ligand contact to FAD. Residues C136 and C139 are joined by a disulfide bond. 286–295 (DVMDHNYRQA) lines the FAD pocket.

It belongs to the class-II pyridine nucleotide-disulfide oxidoreductase family. Homodimer. FAD serves as cofactor.

It is found in the cytoplasm. It catalyses the reaction [thioredoxin]-dithiol + NADP(+) = [thioredoxin]-disulfide + NADPH + H(+). The sequence is that of Thioredoxin reductase (trxB) from Haemophilus influenzae (strain ATCC 51907 / DSM 11121 / KW20 / Rd).